Reading from the N-terminus, the 247-residue chain is Fasciclin-like arabinogalactan protein 6 (247 aa).

The N-terminal stretch at 1-23 (MSSSLFSYVVLLIFLFTIPYIQS) is a signal peptide. One can recognise an FAS1 domain in the interval 36–182 (PINLTAILEA…LAVYVVDSVL (147 aa)). N38, N57, N70, N142, and N153 each carry an N-linked (GlcNAc...) asparagine glycan. The span at 192–212 (TTPTGAPAPKSSTSSSDADSP) shows a compositional bias: low complexity. Residues 192 to 221 (TTPTGAPAPKSSTSSSDADSPAADDEHKSA) are disordered. The GPI-anchor amidated glycine moiety is linked to residue G222. A propeptide spans 223-247 (SSVKRTSLGIVVSFALFCCSVIYIA) (removed in mature form).

This sequence belongs to the fasciclin-like AGP family.

The protein localises to the cell membrane. Functionally, may be a cell surface adhesion protein. The polypeptide is Fasciclin-like arabinogalactan protein 6 (FLA6) (Arabidopsis thaliana (Mouse-ear cress)).